A 232-amino-acid chain; its full sequence is MSTETMIQDVELAEEALPKTRGPQGSKRRLFLSLFSFLLVAGATALFCLLHFGVIGPQKDELSKDFSLISPLALAVRSSSRIPSDKPVAHVVANPQAEGQLQWLNRRANALLANGVELRDNQLVVPSEGLYLVYSQVLFKGQGCPSNFMLLTHSISRIAVSYQAKVNLLSAIKSPCQRETPQGAKTNPWYEPIYLGGVFQLEKGDRLSAEINLPDYLDLAESGQVYFGIIGL.

Residues 1–34 (MSTETMIQDVELAEEALPKTRGPQGSKRRLFLSL) are Cytoplasmic-facing. Serine 2 carries the post-translational modification Phosphoserine; by CK1. Lysine 19 carries N6-myristoyl lysine lipidation. Residues 35 to 55 (FSFLLVAGATALFCLLHFGVI) form a helical; Signal-anchor for type II membrane protein membrane-spanning segment. At 56-232 (GPQKDELSKD…GQVYFGIIGL (177 aa)) the chain is on the extracellular side. An O-linked (GalNAc...) serine; in soluble form glycan is attached at serine 79. The region spanning 87–232 (PVAHVVANPQ…GQVYFGIIGL (146 aa)) is the THD domain. Cysteine 144 and cysteine 176 are joined by a disulfide.

The protein belongs to the tumor necrosis factor family. Homotrimer. Interacts with SPPL2B. The soluble form derives from the membrane form by proteolytic processing. The membrane-bound form is further proteolytically processed by SPPL2A or SPPL2B through regulated intramembrane proteolysis producing TNF intracellular domains (ICD1 and ICD2) released in the cytosol and TNF C-domain 1 and C-domain 2 secreted into the extracellular space. In terms of processing, the membrane form, but not the soluble form, is phosphorylated on serine residues. Dephosphorylation of the membrane form occurs by binding to soluble TNFRSF1A/TNFR1. Post-translationally, O-glycosylated; glycans contain galactose, N-acetylgalactosamine and N-acetylneuraminic acid. The soluble form is demyristoylated by SIRT6, promoting its secretion.

The protein localises to the cell membrane. Its subcellular location is the membrane. The protein resides in the secreted. Its function is as follows. Cytokine that binds to TNFRSF1A/TNFR1 and TNFRSF1B/TNFBR. It is mainly secreted by macrophages and can induce cell death of certain tumor cell lines. It is potent pyrogen causing fever by direct action or by stimulation of interleukin-1 secretion and is implicated in the induction of cachexia, Under certain conditions it can stimulate cell proliferation and induce cell differentiation. Induces insulin resistance in adipocytes via inhibition of insulin-induced IRS1 tyrosine phosphorylation and insulin-induced glucose uptake. Induces GKAP42 protein degradation in adipocytes which is partially responsible for TNF-induced insulin resistance. Plays a role in angiogenesis by inducing VEGF production synergistically with IL1B and IL6. Promotes osteoclastogenesis and therefore mediates bone resorption. The TNF intracellular domain (ICD) form induces IL12 production in dendritic cells. The protein is Tumor necrosis factor (TNF) of Callithrix jacchus (White-tufted-ear marmoset).